We begin with the raw amino-acid sequence, 228 residues long: Large ribosomal subunit protein bL25 (228 aa).

Residues 198-228 (AAIAEAQSAEAAEEKAEAEAEATNEKNDTEE) form a disordered region. Residues 209 to 228 (AEEKAEAEAEATNEKNDTEE) are compositionally biased toward basic and acidic residues.

It belongs to the bacterial ribosomal protein bL25 family. CTC subfamily. In terms of assembly, part of the 50S ribosomal subunit; part of the 5S rRNA/L5/L18/L25 subcomplex. Contacts the 5S rRNA. Binds to the 5S rRNA independently of L5 and L18.

Its function is as follows. This is one of the proteins that binds to the 5S RNA in the ribosome where it forms part of the central protuberance. The polypeptide is Large ribosomal subunit protein bL25 (Methylorubrum populi (strain ATCC BAA-705 / NCIMB 13946 / BJ001) (Methylobacterium populi)).